The chain runs to 90 residues: Large ribosomal subunit protein bL27 (90 aa).

The tract at residues 1-24 (MAHKKGTGSTRNGRDSNSKRLGVK) is disordered.

It belongs to the bacterial ribosomal protein bL27 family.

This Prochlorococcus marinus (strain NATL1A) protein is Large ribosomal subunit protein bL27.